Consider the following 5101-residue polypeptide: Malformin synthetase mlfA (5101 aa).

The tract at residues 225–616 (ERHAANRPHS…CGRADTQVKL (392 aa)) is adenylation 1. Residues 757–830 (SRLEQKIQLA…EAASLAEVQE (74 aa)) enclose the Carrier 1 domain. O-(pantetheine 4'-phosphoryl)serine is present on Ser-791. Positions 868-1299 (EDVFPCTTMQ…ALNTLSLLQA (432 aa)) are condensation 1. Positions 1327–1716 (DRWVTRQPEG…GRKDTQVKLR (390 aa)) are adenylation 2. The Carrier 2 domain occupies 1854-1931 (TPTLELERTL…QLAAEVGEPA (78 aa)). Position 1891 is an O-(pantetheine 4'-phosphoryl)serine (Ser-1891). Disordered regions lie at residues 1932–1961 (GQSA…DGVD) and 1994–2020 (GGSS…KKNA). Composition is skewed to low complexity over residues 1934–1958 (SASS…STND) and 1996–2013 (SSSN…SSSS). Residues 2066-2481 (EDIYPATALQ…AVSCSDKETL (416 aa)) form a condensation 2 region. Residues 2504-2896 (RRTPHAPAVC…IGRRDGQLKL (393 aa)) are adenylation 3. Residues 3032-3108 (RPVTSQEHEM…QLICHLNTIR (77 aa)) enclose the Carrier 3 domain. The residue at position 3069 (Ser-3069) is an O-(pantetheine 4'-phosphoryl)serine. 2 condensation regions span residues 3125-3590 (WVAL…TYDQ) and 3611-4030 (NIYP…EHLV). The segment at 4055-4445 (HNSRQAVCAW…VGRKDNQIKF (391 aa)) is adenylation 4. The Carrier 4 domain maps to 4579 to 4655 (MPSTAAERKM…DLSDQAKSLI (77 aa)). Ser-4616 bears the O-(pantetheine 4'-phosphoryl)serine mark. A condensation 5 region spans residues 4712-5097 (IVVDIPGPID…KIVGLLRHPE (386 aa)).

This sequence belongs to the NRP synthetase family.

It functions in the pathway secondary metabolite biosynthesis. Functionally, nonribosomal peptide synthetase; part of the gene cluster that mediates the biosynthesis of malformins, cyclic pentapeptides with a disulfide bond between 2 consecutive cysteins, that show potential anti-tumor as well as antimalarial and antitrypanosomal properties. The nonribosomal peptide synthetase mlfA is responsible of the formation of the cyclic pentapeptide. The malformin biosynthesis clusters in malformin-producing fungi also contain enzymes involved in the formation of the disulfide bond between the two consecutive cysteins within malformins, in addition to additional tailoring enzymes such as methyltransferases or oxidoreductases. They are also composed of up to 4 major facilitator superfamily transporters, and transcription factors probably involved in the regulation of the expression of those clusters. The sequence is that of Malformin synthetase mlfA from Aspergillus kawachii (strain NBRC 4308) (White koji mold).